Reading from the N-terminus, the 72-residue chain is Small, acid-soluble spore protein C (72 aa).

The protein belongs to the alpha/beta-type SASP family.

Its function is as follows. SASP are bound to spore DNA. They are double-stranded DNA-binding proteins that cause DNA to change to an a-like conformation. They protect the DNA backbone from chemical and enzymatic cleavage and are thus involved in dormant spore's high resistance to UV light. In Priestia megaterium (Bacillus megaterium), this protein is Small, acid-soluble spore protein C (sasP-C).